A 185-amino-acid chain; its full sequence is Ribose 1,5-bisphosphate phosphokinase PhnN (185 aa).

Belongs to the ribose 1,5-bisphosphokinase family.

The enzyme catalyses alpha-D-ribose 1,5-bisphosphate + ATP = 5-phospho-alpha-D-ribose 1-diphosphate + ADP. Its pathway is metabolic intermediate biosynthesis; 5-phospho-alpha-D-ribose 1-diphosphate biosynthesis; 5-phospho-alpha-D-ribose 1-diphosphate from D-ribose 5-phosphate (route II): step 3/3. Its function is as follows. Catalyzes the phosphorylation of ribose 1,5-bisphosphate to 5-phospho-D-ribosyl alpha-1-diphosphate (PRPP). The chain is Ribose 1,5-bisphosphate phosphokinase PhnN from Escherichia coli (strain SMS-3-5 / SECEC).